We begin with the raw amino-acid sequence, 301 residues long: Protoheme IX farnesyltransferase (301 aa).

A run of 9 helical transmembrane segments spans residues 29 to 49 (VVAL…PGVV), 51 to 71 (IVPL…AAAF), 96 to 118 (VSIA…VLYV), 123 to 143 (LTAW…TAYL), 151 to 171 (IVVG…AVTG), 177 to 197 (ALLL…ALAI), 223 to 243 (CIFL…LVGM), 244 to 264 (CGPV…YKAW), and 281 to 301 (FSIY…YLWL).

It belongs to the UbiA prenyltransferase family. Protoheme IX farnesyltransferase subfamily.

Its subcellular location is the cell inner membrane. The enzyme catalyses heme b + (2E,6E)-farnesyl diphosphate + H2O = Fe(II)-heme o + diphosphate. It functions in the pathway porphyrin-containing compound metabolism; heme O biosynthesis; heme O from protoheme: step 1/1. Converts heme B (protoheme IX) to heme O by substitution of the vinyl group on carbon 2 of heme B porphyrin ring with a hydroxyethyl farnesyl side group. The polypeptide is Protoheme IX farnesyltransferase (Shewanella halifaxensis (strain HAW-EB4)).